A 111-amino-acid polypeptide reads, in one-letter code: Ig kappa chain V-III region PC 3741/TEPC 111 (111 aa).

The tract at residues 1–23 (DIVLTQSPASLAVSLGQRATISC) is framework-1. A disulfide bond links cysteine 23 and cysteine 92. A complementarity-determining-1 region spans residues 24–38 (RASESVDSYGNSFMH). Residues 39 to 53 (WYQQKPGQPPKLLIY) form a framework-2 region. A complementarity-determining-2 region spans residues 54-60 (RASNLES). The interval 61–92 (GIPARFSGSGSRTDFTLTINPVEADDVATYYC) is framework-3. The tract at residues 93–101 (QQSNEDPYT) is complementarity-determining-3. The segment at 102 to 111 (FGGGTKLEIK) is framework-4.

This Mus musculus (Mouse) protein is Ig kappa chain V-III region PC 3741/TEPC 111.